Here is a 360-residue protein sequence, read N- to C-terminus: MFVARSIAADHKDLIHDVSFDFHGRRMATCSSDQSVKVWDKSENVNWHCTASWKTHSGSVWRVTWAHPEFGQVLASCSFDRTAAVWEEIVGESNDKLRGQSHWVKRTTLVDSRTSVTDVKFAPKHMGLMLATCSADGVVRIYEAPDVMNLSQWSLQHEISCKLSCSCISWNPSSSRAHSPMIAVGSDDSSPNIMGKVQIYEYNENTRKYAKAETLMSVSDPVHDIAFAPNLGRSFHILAVATKDVRIFTMKPLRKELSSSGGVTKFENHTVAQFDNHNSQVWRVSWNITGTVLASSGDDGTVRLWKANYMDNWKCIGVLKGDGNPVGNSFQGIFGSSIGSASHGLQNSVNGTSTSGRKHS.

WD repeat units lie at residues 10 to 49 (DHKDLIHDVSFDFHGRRMATCSSDQSVKVWDKSENVNWHC), 55 to 96 (THSG…SNDK), 111 to 152 (DSRT…NLSQ), 160 to 210 (SCKL…RKYA), 217 to 258 (SVSD…KELS), and 276 to 315 (NHNSQVWRVSWNITGTVLASSGDDGTVRLWKANYMDNWKC).

It belongs to the WD repeat SEC13 family. In terms of assembly, component of the Nup107-160 subcomplex of the nuclear pore complex (NPC). The Nup107-160 subcomplex includes NUP160, NUP133, NUP107, NUP98, NUP85, NUP43, NUP37, SEH1 and SEC13. Component of the GATOR2 subcomplex, composed of MIOS, SEC13, SEH1L, WDR24 and WDR59. The GATOR2 complex interacts with CASTOR1 and CASTOR2; the interaction is negatively regulated by arginine. The GATOR2 complex interacts with SESN1, SESN2 and SESN3; the interaction is negatively regulated by amino acids.

It localises to the chromosome. Its subcellular location is the centromere. It is found in the kinetochore. The protein resides in the nucleus. The protein localises to the nuclear pore complex. It localises to the lysosome membrane. With respect to regulation, the GATOR2 complex is negatively regulated by the upstream amino acid sensors CASTOR1 and SESN2, which sequester the GATOR2 complex in absence of amino acids. In the presence of abundant amino acids, GATOR2 is released from CASTOR1 and SESN2 and activated. Functionally, component of the Nup107-160 subcomplex of the nuclear pore complex (NPC). The Nup107-160 subcomplex is required for the assembly of a functional NPC. The Nup107-160 subcomplex is also required for normal kinetochore microtubule attachment, mitotic progression and chromosome segregation. This subunit plays a role in recruitment of the Nup107-160 subcomplex to the kinetochore. In terms of biological role, as a component of the GATOR2 complex, functions as an activator of the amino acid-sensing branch of the mTORC1 signaling pathway. The GATOR2 complex indirectly activates mTORC1 through the inhibition of the GATOR1 subcomplex. GATOR2 probably acts as an E3 ubiquitin-protein ligase toward GATOR1. In the presence of abundant amino acids, the GATOR2 complex mediates ubiquitination of the NPRL2 core component of the GATOR1 complex, leading to GATOR1 inactivation. In the absence of amino acids, GATOR2 is inhibited, activating the GATOR1 complex. In Xenopus laevis (African clawed frog), this protein is Nucleoporin SEH1-B (seh1l-b).